A 254-amino-acid polypeptide reads, in one-letter code: Serotonin N-acetyltransferase 1, chloroplastic (254 aa).

The N-terminal 74 residues, 1-74 (MAPAASASAS…LRSGFLKSNN (74 aa)), are a transit peptide targeting the chloroplast. The N-acetyltransferase domain maps to 111-254 (IIFSSAGDVN…IKGMFWYPRF (144 aa)).

This sequence belongs to the acetyltransferase family. Expressed in roots and shoots.

The protein resides in the plastid. The protein localises to the chloroplast. Its subcellular location is the nucleus. The catalysed reaction is serotonin + acetyl-CoA = N-acetylserotonin + CoA + H(+). It carries out the reaction tyramine + acetyl-CoA = N-acetyltyramine + CoA + H(+). It catalyses the reaction tryptamine + acetyl-CoA = N-acetyltryptamine + CoA + H(+). The enzyme catalyses 5-methoxytryptamine + acetyl-CoA = melatonin + CoA + H(+). The protein operates within aromatic compound metabolism; melatonin biosynthesis; melatonin from serotonin: step 1/2. Catalyzes the N-acetylation of serotonin into N-acetylserotonin, the penultimate step in the synthesis of melatonin. Catalyzes in vitro the N-acetylation of tryptamine to produce N-acetyltryptamine, 5-methoxytryptamine to produce melatonin and tyramine to produce N-acetyltyramine. This Oryza sativa subsp. japonica (Rice) protein is Serotonin N-acetyltransferase 1, chloroplastic.